The sequence spans 326 residues: 4-hydroxythreonine-4-phosphate dehydrogenase (326 aa).

2 residues coordinate substrate: His-132 and Thr-133. A divalent metal cation-binding residues include His-163, His-208, and His-263. Substrate is bound by residues Lys-271, Asn-280, and Arg-289.

This sequence belongs to the PdxA family. Homodimer. Zn(2+) is required as a cofactor. It depends on Mg(2+) as a cofactor. Requires Co(2+) as cofactor.

Its subcellular location is the cytoplasm. It carries out the reaction 4-(phosphooxy)-L-threonine + NAD(+) = 3-amino-2-oxopropyl phosphate + CO2 + NADH. It functions in the pathway cofactor biosynthesis; pyridoxine 5'-phosphate biosynthesis; pyridoxine 5'-phosphate from D-erythrose 4-phosphate: step 4/5. Its function is as follows. Catalyzes the NAD(P)-dependent oxidation of 4-(phosphooxy)-L-threonine (HTP) into 2-amino-3-oxo-4-(phosphooxy)butyric acid which spontaneously decarboxylates to form 3-amino-2-oxopropyl phosphate (AHAP). This chain is 4-hydroxythreonine-4-phosphate dehydrogenase, found in Roseobacter denitrificans (strain ATCC 33942 / OCh 114) (Erythrobacter sp. (strain OCh 114)).